The chain runs to 111 residues: Flagellar hook-basal body complex protein FliE (111 aa).

It belongs to the FliE family.

The protein resides in the bacterial flagellum basal body. This chain is Flagellar hook-basal body complex protein FliE, found in Brucella abortus (strain S19).